Here is a 378-residue protein sequence, read N- to C-terminus: 3-dehydroquinate synthase (378 aa).

Residues 115 to 119 (GVVGD), 139 to 140 (TS), Lys-152, and Lys-161 contribute to the NAD(+) site. Zn(2+) contacts are provided by Glu-194, His-256, and His-275.

Belongs to the sugar phosphate cyclases superfamily. Dehydroquinate synthase family. Co(2+) is required as a cofactor. It depends on Zn(2+) as a cofactor. The cofactor is NAD(+).

Its subcellular location is the cytoplasm. It catalyses the reaction 7-phospho-2-dehydro-3-deoxy-D-arabino-heptonate = 3-dehydroquinate + phosphate. Its pathway is metabolic intermediate biosynthesis; chorismate biosynthesis; chorismate from D-erythrose 4-phosphate and phosphoenolpyruvate: step 2/7. Its function is as follows. Catalyzes the conversion of 3-deoxy-D-arabino-heptulosonate 7-phosphate (DAHP) to dehydroquinate (DHQ). The chain is 3-dehydroquinate synthase from Brucella abortus biovar 1 (strain 9-941).